A 141-amino-acid polypeptide reads, in one-letter code: ATP synthase epsilon chain (141 aa).

The protein belongs to the ATPase epsilon chain family. As to quaternary structure, F-type ATPases have 2 components, CF(1) - the catalytic core - and CF(0) - the membrane proton channel. CF(1) has five subunits: alpha(3), beta(3), gamma(1), delta(1), epsilon(1). CF(0) has three main subunits: a, b and c.

It localises to the cell membrane. In terms of biological role, produces ATP from ADP in the presence of a proton gradient across the membrane. The protein is ATP synthase epsilon chain of Mycoplasma mobile (strain ATCC 43663 / 163K / NCTC 11711) (Mesomycoplasma mobile).